We begin with the raw amino-acid sequence, 417 residues long: Gamma-glutamyl phosphate reductase (417 aa).

Belongs to the gamma-glutamyl phosphate reductase family.

Its subcellular location is the cytoplasm. The catalysed reaction is L-glutamate 5-semialdehyde + phosphate + NADP(+) = L-glutamyl 5-phosphate + NADPH + H(+). Its pathway is amino-acid biosynthesis; L-proline biosynthesis; L-glutamate 5-semialdehyde from L-glutamate: step 2/2. Catalyzes the NADPH-dependent reduction of L-glutamate 5-phosphate into L-glutamate 5-semialdehyde and phosphate. The product spontaneously undergoes cyclization to form 1-pyrroline-5-carboxylate. This chain is Gamma-glutamyl phosphate reductase, found in Escherichia coli O127:H6 (strain E2348/69 / EPEC).